The chain runs to 232 residues: Cobalt transport protein CbiM (232 aa).

6 helical membrane passes run 6–26, 43–63, 84–104, 107–127, 135–155, and 181–201; these read GFLP…FVVH, LLLG…LPSV, IMAV…AHGG, TLGA…YGVY, VPLM…TYCV, and IFAV…VIVM.

This sequence belongs to the CbiM family. In terms of assembly, forms an energy-coupling factor (ECF) transporter complex composed of an ATP-binding protein (A component, CbiO), a transmembrane protein (T component, CbiQ) and 2 possible substrate-capture proteins (S components, CbiM and CbiN) of unknown stoichimetry.

Its subcellular location is the cell membrane. It participates in cofactor biosynthesis; adenosylcobalamin biosynthesis. Its function is as follows. Part of the energy-coupling factor (ECF) transporter complex CbiMNOQ involved in cobalt import. This Streptomyces coelicolor (strain ATCC BAA-471 / A3(2) / M145) protein is Cobalt transport protein CbiM.